A 245-amino-acid polypeptide reads, in one-letter code: 1-(5-phosphoribosyl)-5-[(5-phosphoribosylamino)methylideneamino] imidazole-4-carboxamide isomerase (245 aa).

Asp-7 serves as the catalytic Proton acceptor. Asp-129 serves as the catalytic Proton donor.

It belongs to the HisA/HisF family.

It localises to the cytoplasm. The catalysed reaction is 1-(5-phospho-beta-D-ribosyl)-5-[(5-phospho-beta-D-ribosylamino)methylideneamino]imidazole-4-carboxamide = 5-[(5-phospho-1-deoxy-D-ribulos-1-ylimino)methylamino]-1-(5-phospho-beta-D-ribosyl)imidazole-4-carboxamide. The protein operates within amino-acid biosynthesis; L-histidine biosynthesis; L-histidine from 5-phospho-alpha-D-ribose 1-diphosphate: step 4/9. The polypeptide is 1-(5-phosphoribosyl)-5-[(5-phosphoribosylamino)methylideneamino] imidazole-4-carboxamide isomerase (Cronobacter sakazakii (strain ATCC BAA-894) (Enterobacter sakazakii)).